Consider the following 594-residue polypeptide: Aspartate--tRNA ligase (594 aa).

Glutamate 171 serves as a coordination point for L-aspartate. The aspartate stretch occupies residues 195–198 (QLFK). Arginine 217 is a binding site for L-aspartate. ATP is bound by residues 217–219 (RDE) and glutamine 226. Histidine 449 contributes to the L-aspartate binding site. Glutamate 483 contacts ATP. Arginine 490 is a binding site for L-aspartate. 535–538 (GLDR) is an ATP binding site.

The protein belongs to the class-II aminoacyl-tRNA synthetase family. Type 1 subfamily. In terms of assembly, homodimer.

It localises to the cytoplasm. It catalyses the reaction tRNA(Asp) + L-aspartate + ATP = L-aspartyl-tRNA(Asp) + AMP + diphosphate. Functionally, catalyzes the attachment of L-aspartate to tRNA(Asp) in a two-step reaction: L-aspartate is first activated by ATP to form Asp-AMP and then transferred to the acceptor end of tRNA(Asp). The chain is Aspartate--tRNA ligase from Proteus mirabilis (strain HI4320).